The following is a 308-amino-acid chain: Ribosomal RNA small subunit methyltransferase H (308 aa).

Residues 34-36 (GGH), Asp54, Phe80, Asp101, and Gln108 each bind S-adenosyl-L-methionine.

The protein belongs to the methyltransferase superfamily. RsmH family.

The protein localises to the cytoplasm. It catalyses the reaction cytidine(1402) in 16S rRNA + S-adenosyl-L-methionine = N(4)-methylcytidine(1402) in 16S rRNA + S-adenosyl-L-homocysteine + H(+). Specifically methylates the N4 position of cytidine in position 1402 (C1402) of 16S rRNA. In Ureaplasma parvum serovar 3 (strain ATCC 27815 / 27 / NCTC 11736), this protein is Ribosomal RNA small subunit methyltransferase H.